A 438-amino-acid chain; its full sequence is Aspartic proteinase nepenthesin-2 (438 aa).

Positions 1–24 (MASPLYSVVLGLAIVSAIVAPTSS) are cleaved as a signal peptide. Positions 25–79 (TSRGTLLHHGQKRPQPGLRVDLEQVDSGKNLTKYELIKRAIKRGERRMRSINAML) are cleaved as a propeptide — activation peptide. N-linked (GlcNAc...) asparagine glycosylation is present at Asn-54. Residues 96–431 (YLMNVAIGTP…DLQNLAVSFV (336 aa)) form the Peptidase A1 domain. The active site involves Asp-114. Disulfide bonds link Cys-124–Cys-127, Cys-130–Cys-204, Cys-151–Cys-169, Cys-156–Cys-164, Cys-241–Cys-435, and Cys-354–Cys-395. Residue Asp-315 is part of the active site.

It belongs to the peptidase A1 family.

It localises to the secreted. It catalyses the reaction Similar to pepsin, but also cleaves on either side of Asp and at Lys-|-Arg.. Its activity is regulated as follows. Inhibited by pepstatin and by diazoacetyl-D,L-norleucine methyl ester (DAN) in the presence of Cu(2+) ions. Extracellular proteinase found in the pitcher fluid of carnivorous plants. Digest prey for nitrogen uptake. The chain is Aspartic proteinase nepenthesin-2 (nep2) from Nepenthes gracilis (Slender pitcher plant).